We begin with the raw amino-acid sequence, 99 residues long: Phosphoribosyl-ATP pyrophosphatase (99 aa).

Belongs to the PRA-PH family.

Its subcellular location is the cytoplasm. It carries out the reaction 1-(5-phospho-beta-D-ribosyl)-ATP + H2O = 1-(5-phospho-beta-D-ribosyl)-5'-AMP + diphosphate + H(+). The protein operates within amino-acid biosynthesis; L-histidine biosynthesis; L-histidine from 5-phospho-alpha-D-ribose 1-diphosphate: step 2/9. In Methanosphaerula palustris (strain ATCC BAA-1556 / DSM 19958 / E1-9c), this protein is Phosphoribosyl-ATP pyrophosphatase.